Reading from the N-terminus, the 262-residue chain is tRNA pseudouridine synthase A (262 aa).

Catalysis depends on Asp51, which acts as the Nucleophile. Tyr109 contacts substrate.

This sequence belongs to the tRNA pseudouridine synthase TruA family. In terms of assembly, homodimer.

It carries out the reaction uridine(38/39/40) in tRNA = pseudouridine(38/39/40) in tRNA. Formation of pseudouridine at positions 38, 39 and 40 in the anticodon stem and loop of transfer RNAs. This is tRNA pseudouridine synthase A from Actinobacillus pleuropneumoniae serotype 7 (strain AP76).